Reading from the N-terminus, the 96-residue chain is Plasminogen-like protein A (96 aa).

The N-terminal stretch at Met-1–Gly-19 is a signal peptide. In terms of domain architecture, PAN spans Glu-20–Lys-96. Disulfide bonds link Cys-49/Cys-73 and Cys-53/Cys-61.

Expressed in liver.

The protein localises to the secreted. Its function is as follows. May bind non-covalently to lysine binding sites present in the kringle structures of plasminogen. This may interfere with the binding of fibrin or alpha-2-antiplasmin to plasminogen and may result in the localization of activity at sites necessary for extracellular matrix destruction. The chain is Plasminogen-like protein A (PLGLA) from Homo sapiens (Human).